Reading from the N-terminus, the 432-residue chain is Protein arginine N-methyltransferase 2 (432 aa).

Over residues 1 to 11 (MESSSECSSIS) the composition is skewed to low complexity. A disordered region spans residues 1–22 (MESSSECSSISDFQDSTEGDDA). The region spanning 29–88 (LCMREYVVICDYVATDNTQLSLCSGDKVLLLNAVSQDWWWVNHNGTCGYVPASHLHDALN) is the SH3 domain. In terms of domain architecture, SAM-dependent MTase PRMT-type spans 101 to 405 (DEEYYGSYKT…FERNSVWRRH (305 aa)). S-adenosyl-L-methionine is bound by residues His114, Arg123, Gly147, Glu170, and Glu199. Active-site residues include Glu213 and Glu222.

This sequence belongs to the class I-like SAM-binding methyltransferase superfamily. Protein arginine N-methyltransferase family. Interacts with ctnnb1.

The protein localises to the cytoplasm. It localises to the nucleus. The catalysed reaction is L-arginyl-[protein] + 2 S-adenosyl-L-methionine = N(omega),N(omega)-dimethyl-L-arginyl-[protein] + 2 S-adenosyl-L-homocysteine + 2 H(+). Functionally, arginine methyltransferase that methylates the guanidino nitrogens of arginyl residues in proteins such as histones. Involved in growth regulation. Involved in embryonic dorsal development. This chain is Protein arginine N-methyltransferase 2 (prmt2), found in Xenopus laevis (African clawed frog).